Here is a 77-residue protein sequence, read N- to C-terminus: uncharacterized protein (77 aa).

Positions Ser-56 to Asp-77 are disordered. Residues Ser-65–Asp-77 are compositionally biased toward low complexity.

This is an uncharacterized protein from Frog virus 3 (isolate Goorha) (FV-3).